The primary structure comprises 341 residues: Processive diacylglycerol beta-glycosyltransferase (341 aa).

The protein belongs to the glycosyltransferase 2 family. Requires Mg(2+) as cofactor.

The protein localises to the cell membrane. The catalysed reaction is a 1,2-diacyl-sn-glycerol + UDP-alpha-D-glucose = a 1,2-diacyl-3-O-(beta-D-glucopyranosyl)-sn-glycerol + UDP + H(+). The enzyme catalyses a 1,2-diacyl-sn-glycerol + UDP-alpha-D-galactose = a 1,2-diacyl-3-O-(beta-D-galactosyl)-sn-glycerol + UDP + H(+). It catalyses the reaction a 1,2-diacyl-3-O-(beta-D-galactosyl)-sn-glycerol + UDP-alpha-D-glucose = a 1,2-diacyl-3-O-[beta-D-glucopyranosyl-(1-&gt;6)-beta-D-galactopyranosyl]-sn-glycerol + UDP + H(+). It carries out the reaction a 1,2-diacyl-3-O-(beta-D-galactosyl)-sn-glycerol + UDP-alpha-D-galactose = a 1,2-diacyl-3-O-[beta-D-galactosyl-(1-&gt;6)-beta-D-galactosyl]-sn-glycerol + UDP + H(+). Its activity is regulated as follows. Activated by the negatively charged lipid phosphatidylglycerol (PG). Processive glycosyltransferase involved in the biosynthesis of both the non-bilayer-prone beta-monoglycosyldiacylglycerol and the bilayer-forming membrane lipid glucosyl-galactosyldiacylglycerol and digalactosyl-diacylglycerol. These components contribute to regulate the properties and stability of the membrane. Catalyzes sequentially the transfers of glucosyl or galactosyl residues from UDP-Glc or UDP-Gal to diacylglycerol (DAG) acceptor to form the corresponding beta-glycosyl-DAG (3-O-(beta-D-glycopyranosyl)-1,2-diacyl-sn-glycerol). Then, only beta-galactosyl-DAG (3-O-(beta-D-galactopyranosyl)-1,2-diacyl-sn-glycerol) can act as acceptor to give the beta-glycosyl-beta-galactosyl-DAG product (3-O-(beta-D-glycopyranosyl-(1-&gt;6)-D-galactopyranosyl)-1,2-diacyl-sn-glycerol). It can also use alpha-Gal-beta-Gal-DAG, ceramide (Cer) and beta-Gal-Cer as sugar acceptors. The enzyme is supposed to be mainly a galactosyltransferase, with higher glycosyltransferase activity for the addition of the second glycosyl on beta-Gal-DAG as acceptor. The main glycolipid produced in vivo is beta-Glc-beta-Gal-DAG with a beta-1,6 linkage. The polypeptide is Processive diacylglycerol beta-glycosyltransferase (Mycoplasma pneumoniae (strain ATCC 29342 / M129 / Subtype 1) (Mycoplasmoides pneumoniae)).